Reading from the N-terminus, the 273-residue chain is 4-hydroxy-tetrahydrodipicolinate reductase (273 aa).

NAD(+) is bound by residues 12–17 (GAGGRM) and Glu-38. An NADP(+)-binding site is contributed by Arg-39. NAD(+)-binding positions include 102-104 (GTT) and 126-129 (AANF). His-159 acts as the Proton donor/acceptor in catalysis. Residue His-160 coordinates (S)-2,3,4,5-tetrahydrodipicolinate. The active-site Proton donor is the Lys-163. 169–170 (GT) provides a ligand contact to (S)-2,3,4,5-tetrahydrodipicolinate.

It belongs to the DapB family. As to quaternary structure, homotetramer.

Its subcellular location is the cytoplasm. It catalyses the reaction (S)-2,3,4,5-tetrahydrodipicolinate + NAD(+) + H2O = (2S,4S)-4-hydroxy-2,3,4,5-tetrahydrodipicolinate + NADH + H(+). It carries out the reaction (S)-2,3,4,5-tetrahydrodipicolinate + NADP(+) + H2O = (2S,4S)-4-hydroxy-2,3,4,5-tetrahydrodipicolinate + NADPH + H(+). It participates in amino-acid biosynthesis; L-lysine biosynthesis via DAP pathway; (S)-tetrahydrodipicolinate from L-aspartate: step 4/4. In terms of biological role, catalyzes the conversion of 4-hydroxy-tetrahydrodipicolinate (HTPA) to tetrahydrodipicolinate. This is 4-hydroxy-tetrahydrodipicolinate reductase from Escherichia coli O139:H28 (strain E24377A / ETEC).